We begin with the raw amino-acid sequence, 273 residues long: Dermonecrotic toxin LruSicTox-alphaIC1a (273 aa).

The active site involves His5. 2 residues coordinate Mg(2+): Glu25 and Asp27. His41 functions as the Nucleophile in the catalytic mechanism. Disulfide bonds link Cys45/Cys51 and Cys47/Cys190. Asp85 provides a ligand contact to Mg(2+).

Belongs to the arthropod phospholipase D family. Class II subfamily. Mg(2+) is required as a cofactor. Expressed by the venom gland.

It is found in the secreted. The catalysed reaction is an N-(acyl)-sphingosylphosphocholine = an N-(acyl)-sphingosyl-1,3-cyclic phosphate + choline. The enzyme catalyses an N-(acyl)-sphingosylphosphoethanolamine = an N-(acyl)-sphingosyl-1,3-cyclic phosphate + ethanolamine. It carries out the reaction a 1-acyl-sn-glycero-3-phosphocholine = a 1-acyl-sn-glycero-2,3-cyclic phosphate + choline. It catalyses the reaction a 1-acyl-sn-glycero-3-phosphoethanolamine = a 1-acyl-sn-glycero-2,3-cyclic phosphate + ethanolamine. In terms of biological role, dermonecrotic toxins cleave the phosphodiester linkage between the phosphate and headgroup of certain phospholipids (sphingolipid and lysolipid substrates), forming an alcohol (often choline) and a cyclic phosphate. This toxin acts on sphingomyelin (SM). It may also act on ceramide phosphoethanolamine (CPE), lysophosphatidylcholine (LPC) and lysophosphatidylethanolamine (LPE), but not on lysophosphatidylserine (LPS), and lysophosphatidylglycerol (LPG). It acts by transphosphatidylation, releasing exclusively cyclic phosphate products as second products. Induces dermonecrosis, hemolysis, increased vascular permeability, edema, inflammatory response, and platelet aggregation. The chain is Dermonecrotic toxin LruSicTox-alphaIC1a from Loxosceles rufescens (Mediterranean recluse spider).